Reading from the N-terminus, the 1189-residue chain is Pyruvate carboxylase (1189 aa).

Positions 21-473 constitute a Biotin carboxylation domain; that stretch reads TMNKILVANR…WTTFIDDTPE (453 aa). The ATP site is built by K139, E223, and H258. The ATP-grasp domain maps to 143-340; it reads RNLAYAANVP…IVAAQIQIAA (198 aa). Residue R315 is part of the active site. One can recognise a Pyruvate carboxyltransferase domain in the interval 559–826; the sequence is LMIMDTTWRD…ETGIPEANAR (268 aa). Substrate is bound by residues 567–571 and R640; that span reads RDAHQ. A divalent metal cation is bound at residue D568. A divalent metal cation-binding residues include K736, H766, and H768. K736 carries the N6-carboxylysine modification. Position 900 (T900) interacts with substrate. Residues 1099 to 1174 enclose the Biotinyl-binding domain; sequence KADAHNPNEI…DASDLIPKSS (76 aa). K1140 is modified (N6-biotinyllysine).

Requires biotin as cofactor. The cofactor is Zn(2+).

The protein localises to the cytoplasm. The catalysed reaction is hydrogencarbonate + pyruvate + ATP = oxaloacetate + ADP + phosphate + H(+). It participates in carbohydrate biosynthesis; gluconeogenesis. Pyruvate carboxylase catalyzes a 2-step reaction, involving the ATP-dependent carboxylation of the covalently attached biotin in the first step and the transfer of the carboxyl group to pyruvate in the second. This Komagataella pastoris (Yeast) protein is Pyruvate carboxylase (PYC1).